The primary structure comprises 1492 residues: MGDREAVLLEALSRCGLRGLSQAWVDSVWELDFTETEPLDSRIEAEITENGLETFSSLHENLLAFASEDPENSRSVWLLFSENDICRNSLVALLSHFIQAAANKKANAIQRILALNAAGLYFLLLEIPGSVANQVFHPVLFDKSVNALEKCWPRDPNASRKRKKDTLKSSQGDNRGGRKRPRPPRRDEQEMEDLSEEEQDEEEVYFSTRDLMHIRDSIFLVLKNFLRLLPKFSLKEKPQSVLHCIQIFINLTSFESVPQEMPFSDAVSVNHMKYVPELAYHGLWLLCLPIHGEGNQTVRRLFQRLLSVILMMKGGEGSNSALLVISPPVISARNQAIRFISFLVNELKEGTIPVLNILLQHICVKFPDKADYRVYAAQALVKLMENLPNAEYAIFIEWLYKYSKNSKISYRVFALEVVVALLDLPEREADVSLPHENLNFLQHKFLLQHMVFSRCSDKAPTVRSKALSCLAQCLEKNSTTAIDGVQELLQGSSCRTVFGTNITETTGNGTVYASNANEATTHPQKTMATLKIIEVSDTGDTLSSDGKEVLTMLRYRAGDEKTNVRKSALQVLVNVLKCHLIPCSSEDLSTLQDRCRDPAVSVRKQALTSLTELLLAQPHSVLIQKAWLTGLIPVVLDTESSVQEKALECLDQLLLQSITHYKRFKQDDERQKLTWDLLTLLTSESQDLSRYLTKAFHLWSKQDKFSSTFITNLISHTETEHTAPAWMILSKVAGSSPKLDYTKILQSWERVSRQTDADINTTGHILCVIGHIAKHLPADTRTHLIDHVKSWLKEFKSSPEVISPAVEALQKLCHAQTDKPEDVQDLLNDVCGEIVSACEHHISSVVMADCKDEPLDQDLLVKHLFTLGEVAQLCPAKVEKRVLLLVQSILASSVTTEQNSCHSDAEDPPVSQPLSQFKGSNMPSLIRAHAFITLGKLCLQHEDLAKKCIPALARELEVCDDVAIRNNVIIVICDLCIRYTTMVDRYIPNVSVCLRDRDPFIRKQTLIMLTNLLQEEFVKWKGSLFFRFVSVLVDPDPEIAKFGEFCLVHLLLKRNPVMFSQHFIECIFHFNCYEKHEKYNKFAQTKRERTLFSLKGKENKDKRMKIYKFLLEHFTDEQRFNLTTKISHNVLACFVDGILPIDMEANELLSDIFDIMSSKEIKLSAMRSKPGEDVGADDDEMAMANAVMQAAQKKLISQVQKKNFVENIIPIITSLKGFLEQHRIPAVRDLMNYLREMMQDYRDEIKDFFAADKQLAAELEYDMKKYEEQLEREQEENVQNPPSAESTGSPKGSPRAVNAISSPRSPNAPKSPLSTNAQTPGGAAPCTPITTPRVSILKGQGPRPRQMSLSTLAILNSARKAAQDNKKQRSKSIGAQPSTPSPARTTSSKQVTFRSEDQQSDSSLVGRMISTPDVTIENVTFGAGVSYISASQTPLSGRRGSIGSHEKERDVLCIMSPDKPAPQPRKWNVESPVQRRSIRQRISGKAPLKPSN.

Positions 152–201 (WPRDPNASRKRKKDTLKSSQGDNRGGRKRPRPPRRDEQEMEDLSEEEQDE) are disordered. Acidic residues predominate over residues 189–201 (QEMEDLSEEEQDE). HEAT repeat units follow at residues 543–581 (SSDG…CHLI), 583–619 (CSSE…AQPH), and 621–659 (VLIQ…QSIT). Disordered regions lie at residues 1269–1345 (QLER…PRPR), 1359–1406 (RKAA…SLVG), and 1454–1492 (IMSP…KPSN). Residues 1277-1290 (NVQNPPSAESTGSP) show a composition bias toward polar residues. The span at 1377–1388 (PSTPSPARTTSS) shows a compositional bias: low complexity.

Component of the condensin-2 complex, which contains the smc2 and smc4 heterodimer, and three non SMC subunits, ncapg2, ncaph2 and ncapd3 that probably regulate the complex.

The protein localises to the nucleus. In terms of biological role, regulatory subunit of the condensin-2 complex, a complex which establishes mitotic chromosome architecture and is involved in physical rigidity of the chromatid axis. The chain is Condensin-2 complex subunit D3-L from Xenopus laevis (African clawed frog).